Consider the following 590-residue polypeptide: MTYLFNQPSSFARELTEGFVAAHADKVRQVPGGVVRSTRSREGGVAIVVGGGSGHYPAFAGLVGQGLAHGAAMGNLFASPSAQQICSVARAAHNGGGVLLTFGNYAGDVLHFGQAKARLNAEGIPCELLAVTDDISSAPLNEWQKRRGVAGDLMVFKAVSAAAEAGYDLAAVLEVAERANQRTRSLGVAFSGCTLPGAEHPLFTVPEGMMAVGMGIHGEPGIRDVPISTADELAELLVSSLLKEVPHGITTLSGQRISVVLNGLGGVKYEELFVVYRRVSQLLVEQGLTVVEPEVGELVTSFNMAGLSLTLFWLDEELERFWRAPADAPAFRKGSMSPGEPLAERTFVAELEVIPNATAASKAAAHCVAAALNAARDIVLANVTELGRIDAIAGDGDHGIGMERGVIAAADKATEMLERQAGAGTLLQRAADAWADQAGGTSGAIWGVALNALGTVLGDEQRPDGRRVADGVRQAKESVMHFGKAKPGDKTLVDALIPFSLALTQRVETGMSLPEAWQQAAQCAQQAADDTAQLLPKIGRARPLAEKSLGTPDAGAISLAMILDAVSAVLNSDTTSTSSHQTATQAESER.

The DhaK domain maps to 7–331 (QPSSFARELT…WRAPADAPAF (325 aa)). Histidine 217 serves as the catalytic Tele-hemiaminal-histidine intermediate. In terms of domain architecture, DhaL spans 366 to 568 (HCVAAALNAA…LAMILDAVSA (203 aa)). ADP-binding positions include 398-401 (HGIG), 441-442 (TS), glycine 483, arginine 540, and 553-555 (DAG).

It catalyses the reaction L-erythrulose + ATP = L-erythrulose 1-phosphate + ADP + H(+). The protein operates within carbohydrate metabolism. Involved in catabolism of D-apiose. Catalyzes the phosphorylation of L-erythrulose to L-erythrulose 1-phosphate. Can also phosphorylate D-erythrulose and dihydroxyacetone in vitro. The protein is L-erythrulose kinase of Pectobacterium atrosepticum (strain SCRI 1043 / ATCC BAA-672) (Erwinia carotovora subsp. atroseptica).